The following is a 500-amino-acid chain: Galactofuranose transporter ATP-binding protein YtfR (500 aa).

ABC transporter domains are found at residues 10-245 and 259-497; these read LRTE…LGRE and LSDK…IMNA. An ATP-binding site is contributed by 42 to 49; it reads GENGAGKS.

This sequence belongs to the ABC transporter superfamily. In terms of assembly, the complex is composed of two ATP-binding proteins (YtfR), two transmembrane proteins (YtfT and YjfF) and a solute-binding protein (YtfQ).

The protein resides in the cell inner membrane. It catalyses the reaction D-galactofuranose(out) + ATP + H2O = D-galactofuranose(in) + ADP + phosphate + H(+). Functionally, part of the ABC transporter complex YtfQRT-YjfF involved in galactofuranose transport. Responsible for energy coupling to the transport system. The protein is Galactofuranose transporter ATP-binding protein YtfR (ytfR) of Escherichia coli O157:H7.